The sequence spans 552 residues: Dihydroxy-acid dehydratase (552 aa).

Aspartate 78 is a binding site for Mg(2+). [2Fe-2S] cluster is bound at residue cysteine 119. Mg(2+) is bound by residues aspartate 120 and lysine 121. Position 121 is an N6-carboxylysine (lysine 121). A [2Fe-2S] cluster-binding site is contributed by cysteine 191. Glutamate 442 contacts Mg(2+). Catalysis depends on serine 468, which acts as the Proton acceptor.

The protein belongs to the IlvD/Edd family. As to quaternary structure, homodimer. It depends on [2Fe-2S] cluster as a cofactor. Mg(2+) serves as cofactor.

The catalysed reaction is (2R)-2,3-dihydroxy-3-methylbutanoate = 3-methyl-2-oxobutanoate + H2O. It carries out the reaction (2R,3R)-2,3-dihydroxy-3-methylpentanoate = (S)-3-methyl-2-oxopentanoate + H2O. Its pathway is amino-acid biosynthesis; L-isoleucine biosynthesis; L-isoleucine from 2-oxobutanoate: step 3/4. It functions in the pathway amino-acid biosynthesis; L-valine biosynthesis; L-valine from pyruvate: step 3/4. Functionally, functions in the biosynthesis of branched-chain amino acids. Catalyzes the dehydration of (2R,3R)-2,3-dihydroxy-3-methylpentanoate (2,3-dihydroxy-3-methylvalerate) into 2-oxo-3-methylpentanoate (2-oxo-3-methylvalerate) and of (2R)-2,3-dihydroxy-3-methylbutanoate (2,3-dihydroxyisovalerate) into 2-oxo-3-methylbutanoate (2-oxoisovalerate), the penultimate precursor to L-isoleucine and L-valine, respectively. This is Dihydroxy-acid dehydratase from Caldicellulosiruptor bescii (strain ATCC BAA-1888 / DSM 6725 / KCTC 15123 / Z-1320) (Anaerocellum thermophilum).